Reading from the N-terminus, the 194-residue chain is uncharacterized protein (194 aa).

This is an uncharacterized protein from Acanthamoeba polyphaga (Amoeba).